The sequence spans 739 residues: DNA ligase (739 aa).

Residues 1–29 (MTANRPALPTRDKAVSDLSATEASDEHAA) form a disordered region. Residues 51 to 55 (DADYD), 100 to 101 (SL), and glutamate 134 contribute to the NAD(+) site. Lysine 136 serves as the catalytic N6-AMP-lysine intermediate. Arginine 157, glutamate 194, lysine 311, and lysine 335 together coordinate NAD(+). The Zn(2+) site is built by cysteine 440, cysteine 443, cysteine 464, and cysteine 470. The interval 592-612 (PTEMEEASEETPPTRRRKPQG) is disordered. The region spanning 662-739 (ASTSPVSGKT…TEDEWFDLVG (78 aa)) is the BRCT domain.

Belongs to the NAD-dependent DNA ligase family. LigA subfamily. Mg(2+) is required as a cofactor. It depends on Mn(2+) as a cofactor.

The catalysed reaction is NAD(+) + (deoxyribonucleotide)n-3'-hydroxyl + 5'-phospho-(deoxyribonucleotide)m = (deoxyribonucleotide)n+m + AMP + beta-nicotinamide D-nucleotide.. DNA ligase that catalyzes the formation of phosphodiester linkages between 5'-phosphoryl and 3'-hydroxyl groups in double-stranded DNA using NAD as a coenzyme and as the energy source for the reaction. It is essential for DNA replication and repair of damaged DNA. This is DNA ligase from Azorhizobium caulinodans (strain ATCC 43989 / DSM 5975 / JCM 20966 / LMG 6465 / NBRC 14845 / NCIMB 13405 / ORS 571).